The chain runs to 57 residues: Large ribosomal subunit protein bL32 (57 aa).

The protein belongs to the bacterial ribosomal protein bL32 family.

The polypeptide is Large ribosomal subunit protein bL32 (Halothermothrix orenii (strain H 168 / OCM 544 / DSM 9562)).